Reading from the N-terminus, the 101-residue chain is Protein PrgJ (101 aa).

It to S.flexneri MxiI.

Its function is as follows. Required for invasion of epithelial cells. This Salmonella typhimurium (strain LT2 / SGSC1412 / ATCC 700720) protein is Protein PrgJ (prgJ).